The chain runs to 361 residues: G-protein coupled receptor 52 (361 aa).

The Extracellular portion of the chain corresponds to 1-44 (MNESRWTEWRILNMSSSIVNVSEHHSCPLGFGHYSVEDVCIFET). N-linked (GlcNAc...) asparagine glycans are attached at residues Asn2, Asn13, and Asn20. Residues 45–65 (VVIVLLTFLIISGNLTVIFVF) traverse the membrane as a helical segment. Residues 66–81 (HCAPLLHHYTTSYFIQ) are Cytoplasmic-facing. Residues 82–102 (TMAYADLLVGVTCLVPTLSLL) form a helical membrane-spanning segment. Residues 103 to 115 (HYSTGVHESLTCQ) lie on the Extracellular side of the membrane. A disulfide bridge links Cys114 with Cys193. A helical transmembrane segment spans residues 116 to 136 (VFGYIISVLKSVSMACLACIS). The Cytoplasmic portion of the chain corresponds to 137-159 (VDRYLAITKPLSYNQLVTPCRLR). A helical membrane pass occupies residues 160–180 (ICIIMIWIYSCLIFLPSFFGW). Topologically, residues 181–205 (GKPGYHGDIFEWCATSWLTSAYFTC) are extracellular. The chain crosses the membrane as a helical span at residues 206–226 (FIVCLLYAPAALVVCFTYFHI). At 227 to 265 (FKICRQHTKEINDRRARFPSHEVEASREAGHSPDRRYAM) the chain is on the cytoplasmic side. The chain crosses the membrane as a helical span at residues 266–286 (VLFRITSVFYMLWLPYIIYFL). Topologically, residues 287 to 296 (LESSRVLDNP) are extracellular. The chain crosses the membrane as a helical span at residues 297 to 317 (TLSFLTTWLAISNSFCNCVIY). Residues 318 to 361 (SLSNSVFRLGLRRLSETMCTSCVCAKDQEAQDPKPRRRANSCSI) lie on the Cytoplasmic side of the membrane.

It belongs to the G-protein coupled receptor 1 family. Expressed in brain, especially in striatum. Expressed in the striatum, nucleus accumbens, and lateral globus pallidus.

It localises to the cell membrane. Its function is as follows. G- protein coupled receptor activated by antipsychotics reserpine leading to an increase in intracellular cAMP and its internalization. May play a role in locomotor activity through modulation of dopamine, NMDA and ADORA2A-induced locomotor activity. These behavioral changes are accompanied by modulation of the dopamine receptor signaling pathway in striatum. Modulates HTT level via cAMP-dependent but PKA independent mechanisms throught activation of RAB39B that translocates HTT to the endoplasmic reticulum, thus avoiding proteasome degradation. The sequence is that of G-protein coupled receptor 52 from Mus musculus (Mouse).